We begin with the raw amino-acid sequence, 484 residues long: ATP synthase subunit beta (484 aa).

162-169 (GGAGVGKT) serves as a coordination point for ATP.

The protein belongs to the ATPase alpha/beta chains family. As to quaternary structure, F-type ATPases have 2 components, CF(1) - the catalytic core - and CF(0) - the membrane proton channel. CF(1) has five subunits: alpha(3), beta(3), gamma(1), delta(1), epsilon(1). CF(0) has four main subunits: a(1), b(1), b'(1) and c(9-12).

The protein localises to the cellular thylakoid membrane. It catalyses the reaction ATP + H2O + 4 H(+)(in) = ADP + phosphate + 5 H(+)(out). Its function is as follows. Produces ATP from ADP in the presence of a proton gradient across the membrane. The catalytic sites are hosted primarily by the beta subunits. This is ATP synthase subunit beta from Synechococcus elongatus (strain ATCC 33912 / PCC 7942 / FACHB-805) (Anacystis nidulans R2).